A 792-amino-acid polypeptide reads, in one-letter code: Oxidoreductase cns1 (792 aa).

In terms of assembly, interacts with cns2.

It localises to the lipid droplet. The protein operates within secondary metabolite biosynthesis. Its function is as follows. Oxidoreductase; part of the gene cluster that mediates the biosynthesis of cordycepin (COR) and pentostatin (PTN), two adenosine analogs with related bioactivity profiles as both mimic adenosine and can inhibit some of the processes that are adenosine dependent. Within the pathway, cns1 catalyzes the last step by converting the cns2 product 2'-carbonyl-3'-deoxyadenosine (2'-C-3'-dA) into cordycepin (3'-deoxyadenosine). The first step of cordycepin biosynthesis involves hydroxyl phosphorylation of the 3'-OH position on adenosine to produce adenosine-3'-monophosphate (3'-AMP), catalyzed by kinase activity of cns3. Next, 3'-AMP is dephosphorylated to 2'-carbonyl-3'-deoxyadenosine by cns2, which is finally converted to cordycepin by the oxidoreductase cns1. Pentostatin production is mediated by the ATP phosphoribosyltransferase activity of cns3 on adenosine to inhibit the activity of adenosine deaminase (ADA) to prevent COR deamination to 3'-deoxyinosine (3'-dI). This chain is Oxidoreductase cns1, found in Cordyceps militaris (strain CM01) (Caterpillar fungus).